Here is an 842-residue protein sequence, read N- to C-terminus: Alanine--tRNA ligase (842 aa).

Zn(2+) contacts are provided by histidine 549, histidine 553, cysteine 650, and histidine 654.

This sequence belongs to the class-II aminoacyl-tRNA synthetase family. The cofactor is Zn(2+).

It is found in the cytoplasm. It carries out the reaction tRNA(Ala) + L-alanine + ATP = L-alanyl-tRNA(Ala) + AMP + diphosphate. In terms of biological role, catalyzes the attachment of alanine to tRNA(Ala) in a two-step reaction: alanine is first activated by ATP to form Ala-AMP and then transferred to the acceptor end of tRNA(Ala). Also edits incorrectly charged Ser-tRNA(Ala) and Gly-tRNA(Ala) via its editing domain. The protein is Alanine--tRNA ligase of Campylobacter jejuni subsp. jejuni serotype O:23/36 (strain 81-176).